The sequence spans 429 residues: Serine--tRNA ligase (429 aa).

Thr-235–Glu-237 serves as a coordination point for L-serine. Position 266–268 (Arg-266–Glu-268) interacts with ATP. Glu-289 serves as a coordination point for L-serine. ATP is bound at residue Glu-353–Ser-356. Ser-389 is a binding site for L-serine.

The protein belongs to the class-II aminoacyl-tRNA synthetase family. Type-1 seryl-tRNA synthetase subfamily. Homodimer. The tRNA molecule binds across the dimer.

The protein localises to the cytoplasm. The catalysed reaction is tRNA(Ser) + L-serine + ATP = L-seryl-tRNA(Ser) + AMP + diphosphate + H(+). It carries out the reaction tRNA(Sec) + L-serine + ATP = L-seryl-tRNA(Sec) + AMP + diphosphate + H(+). The protein operates within aminoacyl-tRNA biosynthesis; selenocysteinyl-tRNA(Sec) biosynthesis; L-seryl-tRNA(Sec) from L-serine and tRNA(Sec): step 1/1. Its function is as follows. Catalyzes the attachment of serine to tRNA(Ser). Is also able to aminoacylate tRNA(Sec) with serine, to form the misacylated tRNA L-seryl-tRNA(Sec), which will be further converted into selenocysteinyl-tRNA(Sec). The sequence is that of Serine--tRNA ligase from Haemophilus influenzae (strain 86-028NP).